Consider the following 537-residue polypeptide: Beta-arabinofuranosyltransferase RAY1 (537 aa).

Residues D370–D372 carry the DXD motif motif.

It belongs to the glycosyltransferase 77 family.

Beta-arabinofuranosyltransferase that transfers specifically an arabinosyl residue from UDP-arabinofuranose to the monosaccharide galactose or beta-methyl-galactoside in vitro. Catalyzes the addition of a beta-arabinofuranose residue onto a beta-galactosyl residue of an Yariv-precipitable wall polymer in vivo. This Arabidopsis thaliana (Mouse-ear cress) protein is Beta-arabinofuranosyltransferase RAY1.